Consider the following 316-residue polypeptide: Homoserine kinase (316 aa).

This sequence belongs to the pseudomonas-type ThrB family.

It catalyses the reaction L-homoserine + ATP = O-phospho-L-homoserine + ADP + H(+). It participates in amino-acid biosynthesis; L-threonine biosynthesis; L-threonine from L-aspartate: step 4/5. The sequence is that of Homoserine kinase from Pseudomonas aeruginosa (strain LESB58).